Reading from the N-terminus, the 74-residue chain is UPF0435 protein ABC2298 (74 aa).

Belongs to the UPF0435 family.

The chain is UPF0435 protein ABC2298 from Shouchella clausii (strain KSM-K16) (Alkalihalobacillus clausii).